A 371-amino-acid polypeptide reads, in one-letter code: Diterpene cyclase DtcycA (371 aa).

Mg(2+) contacts are provided by N234, S238, and E242.

This sequence belongs to the terpene synthase family. Homodimer. The cofactor is Mg(2+).

It catalyses the reaction (2E,6E,10E)-geranylgeranyl diphosphate = cembrene C + diphosphate. The enzyme catalyses (2E,6E,10E)-geranylgeranyl diphosphate + H2O = (R)-nephthenol + diphosphate. In terms of biological role, diterpene cyclases that can form multiple diterpene products. The polypeptide is Diterpene cyclase DtcycA (Streptomyces sp).